The following is a 473-amino-acid chain: H(+)/Cl(-) exchange transporter ClcA (473 aa).

The Cytoplasmic portion of the chain corresponds to 1-32 (MKTDTPSLETPQAARLRRRQLIRQLLERDKTP). The chain crosses the membrane as a helical span at residues 33-69 (LAILFMAAVVGTLVGLAAVAFDKGVAWLQNQRMGALV). The Periplasmic portion of the chain corresponds to 70-76 (HTADNYP). Residues 77–100 (LLLTVAFLCSAVLAMFGYFLVRKY) form a helical membrane-spanning segment. Positions 106 to 110 (GSGIP) match the Selectivity filter part_1 motif. Serine 107 contributes to the chloride binding site. The segment at residues 109-116 (IPEIEGAL) is an intramembrane region (helical). Over 117-123 (EDQRPVR) the chain is Cytoplasmic. 2 helical membrane passes run 124–141 (WWRVLPVKFFGGLGTLGG) and 148–166 (EGPTVQIGGNIGRMVLDVF). Residues 146 to 150 (GREGP) carry the Selectivity filter part_2 motif. Topologically, residues 167-176 (RLKGDEARHT) are cytoplasmic. 2 intramembrane regions (helical) span residues 177–189 (LLATGAAAGLAAA) and 193–201 (PLAGILFII). The Cytoplasmic portion of the chain corresponds to 202-214 (EEMRPQFRYTLIS). Residues 215 to 232 (IKAVFIGVIMSTIMYRIF) form a helical membrane-spanning segment. The Periplasmic portion of the chain corresponds to 233–252 (NHEVALIDVGKLSDAPLNTL). The chain crosses the membrane as a helical span at residues 253 to 281 (WLYLILGIIFGIFGPIFNKWVLGMQDLLH). Residues 282-287 (RVHGGN) are Cytoplasmic-facing. A helical membrane pass occupies residues 288 to 309 (ITKWVLMGGAIGGLCGLLGFVA). The Periplasmic portion of the chain corresponds to 310-329 (PATSGGGFNLIPIATAGNFS). A run of 2 helical transmembrane segments spans residues 330–349 (MGMLVFIFVARVITTLLCFS) and 355–376 (GIFAPMLALGTVLGTAFGMVAV). Positions 355-359 (GIFAP) match the Selectivity filter part_3 motif. Isoleucine 356 and phenylalanine 357 together coordinate chloride. Over 377 to 386 (ELFPQYHLEA) the chain is Periplasmic. An intramembrane region (helical) is located at residues 387-401 (GTFAIAGMGALLAAS). The note=Loop between two helices intramembrane region spans 402–404 (IRA). Positions 405–416 (PLTGIILVLEMT) form an intramembrane region, helical. Positions 417–421 (DNYQL) form an intramembrane region, note=Loop between two helices. Residues 422 to 438 (ILPMIITGLGATLLAQF) form a helical membrane-spanning segment. Over 439–473 (TGGKPLYSAILARTLAKQEAEQLARSKAASARENT) the chain is Cytoplasmic. A chloride-binding site is contributed by tyrosine 445.

It belongs to the chloride channel (TC 2.A.49) family. ClcA subfamily. As to quaternary structure, homodimer.

The protein localises to the cell inner membrane. The catalysed reaction is 2 chloride(in) + H(+)(out) = 2 chloride(out) + H(+)(in). Functionally, proton-coupled chloride transporter. Functions as antiport system and exchanges two chloride ions for 1 proton. Probably acts as an electrical shunt for an outwardly-directed proton pump that is linked to amino acid decarboxylation, as part of the extreme acid resistance (XAR) response. The chain is H(+)/Cl(-) exchange transporter ClcA from Escherichia coli O45:K1 (strain S88 / ExPEC).